The primary structure comprises 260 residues: 14-3-3-like protein (260 aa).

This sequence belongs to the 14-3-3 family.

This Pisum sativum (Garden pea) protein is 14-3-3-like protein.